The sequence spans 417 residues: UPF0761 membrane protein Daci_4966 (417 aa).

Transmembrane regions (helical) follow at residues 49–69, 106–126, 146–166, 187–207, 235–255, and 256–276; these read VLALVPFFTVALALFTAFPIF, QLGMAGFSILVITAVALILTI, VLIYWAAITLGPLVLGLSLVL, FIFDSIEYLALAAGMAGLYHY, ALGLYLASVPTYSVIYGTFAT, and LPILLIWIYMAWIIVLLGAVV.

This sequence belongs to the UPF0761 family.

It is found in the cell inner membrane. The chain is UPF0761 membrane protein Daci_4966 from Delftia acidovorans (strain DSM 14801 / SPH-1).